The primary structure comprises 188 residues: Elongation factor P-like protein (188 aa).

This sequence belongs to the elongation factor P family.

This is Elongation factor P-like protein from Xanthomonas euvesicatoria pv. vesicatoria (strain 85-10) (Xanthomonas campestris pv. vesicatoria).